Reading from the N-terminus, the 785-residue chain is Endonuclease MutS2 (785 aa).

ATP is bound at residue 335-342; sequence GPNTGGKT. The Smr domain maps to 710–785; sequence LDLRGERYED…GNGVTIVEFK (76 aa).

This sequence belongs to the DNA mismatch repair MutS family. MutS2 subfamily. Homodimer. Binds to stalled ribosomes, contacting rRNA.

Its function is as follows. Endonuclease that is involved in the suppression of homologous recombination and thus may have a key role in the control of bacterial genetic diversity. Functionally, acts as a ribosome collision sensor, splitting the ribosome into its 2 subunits. Detects stalled/collided 70S ribosomes which it binds and splits by an ATP-hydrolysis driven conformational change. Acts upstream of the ribosome quality control system (RQC), a ribosome-associated complex that mediates the extraction of incompletely synthesized nascent chains from stalled ribosomes and their subsequent degradation. Probably generates substrates for RQC. This chain is Endonuclease MutS2, found in Listeria monocytogenes serovar 1/2a (strain ATCC BAA-679 / EGD-e).